A 289-amino-acid polypeptide reads, in one-letter code: Survival motor neuron protein (289 aa).

The segment covering 1–10 has biased composition (gly residues); sequence MAMGSGGGAG. Residues 1–27 are disordered; sequence MAMGSGGGAGSEQEDTVLFRRGTGQSD. The interval 11–42 is P1 (binding site for GEMIN2); the sequence is SEQEDTVLFRRGTGQSDDSDIWDDTALIKAYD. Thr-23 carries the phosphothreonine modification. A phosphoserine mark is found at Ser-26 and Ser-29. A Glycyl lysine isopeptide (Lys-Gly) (interchain with G-Cter in SUMO2) cross-link involves residue Lys-49. The interval 55-88 is disordered; it reads GDMCETSDKPKGTARRKPAKKNKNQKKNATAPLK. Residues 66–80 show a composition bias toward basic residues; the sequence is GTARRKPAKKNKNQK. Residue Thr-67 is modified to Phosphothreonine. The Tudor domain maps to 89–149; it reads QWKAGDKCSA…LSPTCEVANN (61 aa). The interval 95-205 is required for interaction with RPP20/POP7; the sequence is KCSAVWSEDG…VPGAGLGPGK (111 aa). The disordered stretch occupies residues 150-226; sequence TEQNTQENES…PPPPPPFLPC (77 aa). Residues 171–181 show a composition bias toward basic residues; it reads RSLRSKAHSKS. Lys-205 participates in a covalent cross-link: Glycyl lysine isopeptide (Lys-Gly) (interchain with G-Cter in SUMO2). Pro residues predominate over residues 212–226; that stretch reads GPPPPPPPPPPFLPC. Residues 235–262 form a P2 (binding site for SM B) region; the sequence is PPIIPPPPPISPDCLDDTDALGSMLISW. The segment at 274-289 is required for interaction with SYNCRIP; that stretch reads GFRQNKKEGKKCSHTN.

This sequence belongs to the SMN family. In terms of assembly, homooligomer; may form higher order homooligomers in the dimer to octamer range. Part of the core SMN complex that contains SMN1, GEMIN2/SIP1, DDX20/GEMIN3, GEMIN4, GEMIN5, GEMIN6, GEMIN7, GEMIN8 and STRAP/UNRIP. Part of the SMN-Sm complex that contains SMN1, GEMIN2/SIP1, DDX20/GEMIN3, GEMIN4, GEMIN5, GEMIN6, GEMIN7, GEMIN8, STRAP/UNRIP and the Sm proteins SNRPB, SNRPD1, SNRPD2, SNRPD3, SNRPE, SNRPF and SNRPG. Component of an import snRNP complex composed of KPNB1, RNUT1, SMN1 and ZNF259. Interacts with DDX20, FBL, NOLA1, RNUT1 and with several spliceosomal snRNP core Sm proteins, including SNRPB, SNRPD1, SNRPD2, SNRPD3, SNRPE and ILF3. Interacts with GEMIN2; the interaction is direct. Interacts with GEMIN3; the interaction is direct. Interacts with GEMIN8; the interaction is direct. Interacts with SNRPB; the interaction is direct. Interacts (via Tudor domain) with SNRPD1 (via C-terminus); the interaction is direct. Interacts with SNRPD2; the interaction is direct. Interacts (via Tudor domain) with SNRPD3 (via C-terminus); the interaction is direct. Interacts with SNRPE; the interaction is direct. Interacts with OSTF1, LSM10, LSM11 and RPP20/POP7. Interacts (via C-terminal region) with ZPR1 (via C-terminal region). Interacts (via Tudor domain) with COIL. Interacts with SETX; recruits SETX to POLR2A. Interacts with POLR2A (via the C-terminal domain (CTD)). Interacts with PRMT5. Interacts with XRN2. Interacts (via C-terminus) with FMR1 (via C-terminus); the interaction is direct and occurs in a RNA-independent manner. Interacts with SYNCRIP. Interacts (via Tudor domain) with SF3B2 (methylated form). Interacts with WRAP53/TCAB1. Interacts (via Tudor domain) with ELAVL4 in an RNA-independent manner; the interaction is required for localization of ELAVL4 to RNA granules. Interacts with FRG1.

Its subcellular location is the nucleus. The protein resides in the gem. The protein localises to the cajal body. It localises to the cytoplasm. It is found in the cytoplasmic granule. Its subcellular location is the perikaryon. The protein resides in the cell projection. The protein localises to the neuron projection. It localises to the axon. It is found in the myofibril. Its subcellular location is the sarcomere. The protein resides in the z line. Its function is as follows. The SMN complex catalyzes the assembly of small nuclear ribonucleoproteins (snRNPs), the building blocks of the spliceosome, and thereby plays an important role in the splicing of cellular pre-mRNAs. Most spliceosomal snRNPs contain a common set of Sm proteins SNRPB, SNRPD1, SNRPD2, SNRPD3, SNRPE, SNRPF and SNRPG that assemble in a heptameric protein ring on the Sm site of the small nuclear RNA to form the core snRNP (Sm core). In the cytosol, the Sm proteins SNRPD1, SNRPD2, SNRPE, SNRPF and SNRPG are trapped in an inactive 6S pICln-Sm complex by the chaperone CLNS1A that controls the assembly of the core snRNP. To assemble core snRNPs, the SMN complex accepts the trapped 5Sm proteins from CLNS1A forming an intermediate. Binding of snRNA inside 5Sm ultimately triggers eviction of the SMN complex, thereby allowing binding of SNRPD3 and SNRPB to complete assembly of the core snRNP. Within the SMN complex, SMN1 acts as a structural backbone and together with GEMIN2 it gathers the Sm complex subunits. Ensures the correct splicing of U12 intron-containing genes that may be important for normal motor and proprioceptive neurons development. Also required for resolving RNA-DNA hybrids created by RNA polymerase II, that form R-loop in transcription terminal regions, an important step in proper transcription termination. May also play a role in the metabolism of small nucleolar ribonucleoprotein (snoRNPs). This is Survival motor neuron protein (Smn1) from Rattus norvegicus (Rat).